The following is a 320-amino-acid chain: Cytochrome c biogenesis protein CcsA (320 aa).

The next 8 helical transmembrane spans lie at 13 to 33 (ISFS…FLLV), 46 to 66 (GMIV…IYSG), 73 to 93 (LYES…VSYL), 102 to 122 (LSAI…SGLL), 147 to 167 (MVLG…LLVI), 226 to 246 (IISL…VWAN), 259 to 274 (ETWA…IYFH), and 289 to 309 (VASM…LLGI).

The protein belongs to the CcmF/CycK/Ccl1/NrfE/CcsA family. As to quaternary structure, may interact with Ccs1.

It is found in the plastid. Its subcellular location is the chloroplast thylakoid membrane. Its function is as follows. Required during biogenesis of c-type cytochromes (cytochrome c6 and cytochrome f) at the step of heme attachment. The protein is Cytochrome c biogenesis protein CcsA of Gossypium hirsutum (Upland cotton).